Here is a 146-residue protein sequence, read N- to C-terminus: Hemoglobin subunit beta (146 aa).

An N-acetylvaline modification is found at Val-1. Positions 2–146 (HLSAEEKAAV…VANALAHKYH (145 aa)) constitute a Globin domain. Position 12 is a phosphothreonine (Thr-12). Position 44 is a phosphoserine (Ser-44). Lys-59 carries the post-translational modification N6-acetyllysine. His-63 is a binding site for heme b. Lys-82 is modified (N6-acetyllysine). His-92 serves as a coordination point for heme b. The residue at position 93 (Cys-93) is an S-nitrosocysteine. The residue at position 144 (Lys-144) is an N6-acetyllysine.

Belongs to the globin family. Heterotetramer of two alpha chains and two beta chains. In terms of tissue distribution, red blood cells.

Involved in oxygen transport from the lung to the various peripheral tissues. The polypeptide is Hemoglobin subunit beta (HBB) (Ctenodactylus gundi (Northern gundi)).